Consider the following 447-residue polypeptide: MTLENNMDKKLFCISTYGCQMNEEDSEKLSGMLKSQGYERTENKEEASIIIFNTCCVRENAENKVFGNLGQLKQLKKKNPNLVIAICGCMMQQVGMADKVLKTFPYVDIIFGTHNAHKFPEYLHRVLQEGVQVKEILNKEEGIVEGLPIDRKSDVKAFVTIMYGCNNFCTYCIVPYVRGRERSRKSEDIIKEIEELVSKGYKEITLLGQNVNSYGKGLEEDIDFAGLLRKVNEVKGLERVRFMTSHPKDLSDDVIMAIKECDKLCEQVHLPVQSGSSRILKEMNRHYDREYYLDLVKKIKSEIPDVTLTTDIIIGFPGETEEDFLDTLSLCEEVGYDSAFTFIYSRRNHTPADKMENQIPDDIKHDRFNRLVEAINKKVVIKNKEYEGKVVEVLVEGPSKNDETKLTGRTRNGKLVNFAGDEKLVGELVNLKIVRAQPFSLIGEIVE.

The MTTase N-terminal domain maps to 10–128 (KLFCISTYGC…FPEYLHRVLQ (119 aa)). 6 residues coordinate [4Fe-4S] cluster: Cys19, Cys55, Cys89, Cys165, Cys169, and Cys172. Residues 151 to 382 (RKSDVKAFVT…EAINKKVVIK (232 aa)) enclose the Radical SAM core domain. Positions 384-447 (KEYEGKVVEV…PFSLIGEIVE (64 aa)) constitute a TRAM domain.

The protein belongs to the methylthiotransferase family. MiaB subfamily. As to quaternary structure, monomer. [4Fe-4S] cluster is required as a cofactor.

The protein localises to the cytoplasm. The enzyme catalyses N(6)-dimethylallyladenosine(37) in tRNA + (sulfur carrier)-SH + AH2 + 2 S-adenosyl-L-methionine = 2-methylsulfanyl-N(6)-dimethylallyladenosine(37) in tRNA + (sulfur carrier)-H + 5'-deoxyadenosine + L-methionine + A + S-adenosyl-L-homocysteine + 2 H(+). Its function is as follows. Catalyzes the methylthiolation of N6-(dimethylallyl)adenosine (i(6)A), leading to the formation of 2-methylthio-N6-(dimethylallyl)adenosine (ms(2)i(6)A) at position 37 in tRNAs that read codons beginning with uridine. This Clostridium perfringens (strain SM101 / Type A) protein is tRNA-2-methylthio-N(6)-dimethylallyladenosine synthase.